The primary structure comprises 505 residues: Lysine--tRNA ligase (505 aa).

Mg(2+) is bound by residues Glu415 and Glu422.

This sequence belongs to the class-II aminoacyl-tRNA synthetase family. In terms of assembly, homodimer. Requires Mg(2+) as cofactor.

It localises to the cytoplasm. The catalysed reaction is tRNA(Lys) + L-lysine + ATP = L-lysyl-tRNA(Lys) + AMP + diphosphate. The sequence is that of Lysine--tRNA ligase (lysS) from Escherichia coli (strain K12).